A 1273-amino-acid chain; its full sequence is DNA gyrase subunit A (1273 aa).

The Topo IIA-type catalytic domain occupies 42-931; sequence LPEVRDGLKP…VDGDVNDEDL (890 aa). The active-site O-(5'-phospho-DNA)-tyrosine intermediate is Tyr130. A DOD-type homing endonuclease domain is found at 256-396; it reads LFGAFISGGF…VQQMLLEFGV (141 aa). A GyrA-box motif is present at residues 958–964; sequence QKRGGKG.

This sequence belongs to the type II topoisomerase GyrA/ParC subunit family. In terms of assembly, heterotetramer, composed of two GyrA and two GyrB chains. In the heterotetramer, GyrA contains the active site tyrosine that forms a transient covalent intermediate with the DNA, while GyrB binds cofactors catalyzes ATP hydrolysis. This protein undergoes a protein self splicing that involves a post-translational excision of the intervening region (intein) followed by peptide ligation.

It localises to the cytoplasm. The catalysed reaction is ATP-dependent breakage, passage and rejoining of double-stranded DNA.. Its activity is regulated as follows. DNA supercoiling is inhibited by fluoroquinolones; IC(50) 1 ug/ml for sitafloxacin. Functionally, a type II topoisomerase that negatively supercoils closed circular double-stranded (ds) DNA in an ATP-dependent manner to modulate DNA topology and maintain chromosomes in an underwound state. Negative supercoiling favors strand separation, and DNA replication, transcription, recombination and repair, all of which involve strand separation. Also able to catalyze the interconversion of other topological isomers of dsDNA rings, including catenanes and knotted rings. Type II topoisomerases break and join 2 DNA strands simultaneously in an ATP-dependent manner. The sequence is that of DNA gyrase subunit A from Mycobacterium leprae (strain TN).